Reading from the N-terminus, the 133-residue chain is S-adenosylmethionine decarboxylase proenzyme (133 aa).

Ser63 (schiff-base intermediate with substrate; via pyruvic acid) is an active-site residue. Ser63 bears the Pyruvic acid (Ser); by autocatalysis mark. The Proton acceptor; for processing activity role is filled by His68. Catalysis depends on Cys83, which acts as the Proton donor; for catalytic activity.

This sequence belongs to the prokaryotic AdoMetDC family. Type 1 subfamily. In terms of assembly, heterotetramer of two alpha and two beta chains arranged as a dimer of alpha/beta heterodimers. Pyruvate is required as a cofactor. Is synthesized initially as an inactive proenzyme. Formation of the active enzyme involves a self-maturation process in which the active site pyruvoyl group is generated from an internal serine residue via an autocatalytic post-translational modification. Two non-identical subunits are generated from the proenzyme in this reaction, and the pyruvate is formed at the N-terminus of the alpha chain, which is derived from the carboxyl end of the proenzyme. The post-translation cleavage follows an unusual pathway, termed non-hydrolytic serinolysis, in which the side chain hydroxyl group of the serine supplies its oxygen atom to form the C-terminus of the beta chain, while the remainder of the serine residue undergoes an oxidative deamination to produce ammonia and the pyruvoyl group blocking the N-terminus of the alpha chain.

The catalysed reaction is S-adenosyl-L-methionine + H(+) = S-adenosyl 3-(methylsulfanyl)propylamine + CO2. It participates in amine and polyamine biosynthesis; S-adenosylmethioninamine biosynthesis; S-adenosylmethioninamine from S-adenosyl-L-methionine: step 1/1. In terms of biological role, catalyzes the decarboxylation of S-adenosylmethionine to S-adenosylmethioninamine (dcAdoMet), the propylamine donor required for the synthesis of the polyamines spermine and spermidine from the diamine putrescine. This Acidithiobacillus ferrooxidans (strain ATCC 23270 / DSM 14882 / CIP 104768 / NCIMB 8455) (Ferrobacillus ferrooxidans (strain ATCC 23270)) protein is S-adenosylmethionine decarboxylase proenzyme.